A 71-amino-acid chain; its full sequence is Small ribosomal subunit protein bS21 (71 aa).

Residues 34–44 (RREHYEKPTSE) are compositionally biased toward basic and acidic residues. Residues 34-71 (RREHYEKPTSERKRKKAAAVKRHAKKLSRDNARRTRLY) form a disordered region. Over residues 45–59 (RKRKKAAAVKRHAKK) the composition is skewed to basic residues. A compositionally biased stretch (basic and acidic residues) spans 60 to 71 (LSRDNARRTRLY).

This sequence belongs to the bacterial ribosomal protein bS21 family.

The chain is Small ribosomal subunit protein bS21 from Idiomarina loihiensis (strain ATCC BAA-735 / DSM 15497 / L2-TR).